A 132-amino-acid chain; its full sequence is Large ribosomal subunit protein uL14 (132 aa).

The protein belongs to the universal ribosomal protein uL14 family. As to quaternary structure, part of the 50S ribosomal subunit. Forms a cluster with proteins L3 and L24e, part of which may contact the 16S rRNA in 2 intersubunit bridges.

Binds to 23S rRNA. Forms part of two intersubunit bridges in the 70S ribosome. The sequence is that of Large ribosomal subunit protein uL14 from Methanococcus maripaludis (strain C7 / ATCC BAA-1331).